Consider the following 226-residue polypeptide: V-type proton ATPase subunit E 1 (226 aa).

Position 2 is an N-acetylalanine (A2). Y56 is modified (phosphotyrosine).

It belongs to the V-ATPase E subunit family. As to quaternary structure, V-ATPase is a heteromultimeric enzyme made up of two complexes: the ATP-hydrolytic V1 complex and the proton translocation V0 complex. The V1 complex consists of three catalytic AB heterodimers that form a heterohexamer, three peripheral stalks each consisting of EG heterodimers, one central rotor including subunits D and F, and the regulatory subunits C and H. The proton translocation complex V0 consists of the proton transport subunit a, a ring of proteolipid subunits c9c'', rotary subunit d, subunits e and f, and the accessory subunits ATP6AP1/Ac45 and ATP6AP2/PRR. Interacts with RABL2/RABL2A; binds preferentially to GTP-bound RABL2. Interacts with ALDOC. Interacts with RAB11B. In terms of tissue distribution, kidney; localizes to early distal nephron, encompassing thick ascending limbs and distal convoluted tubules (at protein level). Ubiquitous. High expression in the skin.

The protein resides in the apical cell membrane. Its subcellular location is the cytoplasmic vesicle. It is found in the secretory vesicle. It localises to the synaptic vesicle membrane. The protein localises to the clathrin-coated vesicle membrane. Its function is as follows. Subunit of the V1 complex of vacuolar(H+)-ATPase (V-ATPase), a multisubunit enzyme composed of a peripheral complex (V1) that hydrolyzes ATP and a membrane integral complex (V0) that translocates protons. V-ATPase is responsible for acidifying and maintaining the pH of intracellular compartments and in some cell types, is targeted to the plasma membrane, where it is responsible for acidifying the extracellular environment. The protein is V-type proton ATPase subunit E 1 (ATP6V1E1) of Homo sapiens (Human).